The primary structure comprises 716 residues: Hepatocyte growth factor-like protein (716 aa).

The first 18 residues, 1 to 18, serve as a signal peptide directing secretion; sequence MGWLPLLLLLVQCSRALG. Residues 19 to 105 form the PAN domain; the sequence is QRSPLNDFQL…SLCHLFQKKD (87 aa). 20 disulfides stabilise this stretch: cysteine 56/cysteine 78, cysteine 60/cysteine 66, cysteine 110/cysteine 186, cysteine 131/cysteine 169, cysteine 157/cysteine 181, cysteine 191/cysteine 268, cysteine 194/cysteine 333, cysteine 212/cysteine 251, cysteine 240/cysteine 263, cysteine 292/cysteine 370, cysteine 313/cysteine 352, cysteine 341/cysteine 364, cysteine 379/cysteine 457, cysteine 400/cysteine 440, cysteine 428/cysteine 452, cysteine 477/cysteine 593, cysteine 512/cysteine 528, cysteine 607/cysteine 672, cysteine 637/cysteine 651, and cysteine 662/cysteine 690. N-linked (GlcNAc...) asparagine glycosylation is present at asparagine 72. Kringle domains follow at residues 110-186, 191-268, 292-370, and 379-457; these read CIMD…IKTC, CVLC…LPSC, CFRG…IPRC, and CYHG…LQRC. N-linked (GlcNAc...) asparagine glycosylation is present at asparagine 173. An N-linked (GlcNAc...) asparagine glycan is attached at asparagine 305. The region spanning 489 to 714 is the Peptidase S1 domain; the sequence is VVGGHPGNSP…FVDWINKVMQ (226 aa). N-linked (GlcNAc...) asparagine glycosylation is present at asparagine 620.

Belongs to the peptidase S1 family. Plasminogen subfamily. Dimer of an alpha chain and a beta chain linked by a disulfide bond. Interacts (via beta chain) with MST1R (via SEMA domain). Cleaved after Arg-488, probably by HPN/Hepsin, to yield the active form consisting of two disulfide-linked chains. In terms of tissue distribution, liver. Lower levels in lung, placenta and adrenal.

The protein resides in the secreted. The chain is Hepatocyte growth factor-like protein (Mst1) from Mus musculus (Mouse).